The sequence spans 1290 residues: MTKRNKKNNKLYKNIKAIKLSIASNDTILNWSEGEVTKAETINYKSLKPEPGGLFDEAIFGPVKDYECACGKFKKIKYRGVRCDRCGVWVTESIVRRERMGHIALVSPVAHIWMSKELPSPSKISLVLNISYKEVEQVLYFVNYIVLDTGKIKDPKIMPFKFKEVLDLAGKGSLTTRQKMRRVIGYIFRNLIKNRSSEDYRKGKIFYESLKNSSLPFSLNDAFNYIKKYTGFRVGIGAEAILELLNKIDLNYEFSKLNDALRKAKKDSVEDAKVKKILRQLETISWFRNSKLHPKNMILHTVPVIPPDIRPIIQLDGAKFTTSDINNFYRRVIIRNDRLRRILEDGTVPAIVVNNEKRLLQESVDALFDNSSRHKPALSKDKRSLKSLTDRLKGKQGLFRHNLLGKRVDYSGRSVIVVGPELKMYEVGIPALMILKLFKPFIIHGLINKFDSNGNEIRPIASSIRQAEDMIKNQDDLIWGIVYDVIKDRPVLLNRAPTLHRLGIQAFEPRIVDGKAIRLHPLVTTAFNADFDGDQMAVHVPLSENAVNEARAILLASKHILGLKDGRPIVTPTQDMVLGNYYLTTERKGQTGEGIIFGTVHEARAAYEAGKVHLHAIVGISTKAFPNKHFEAQGTLITTVGKIIFNDVLGDNIPYINEGEFDEHACPQKFIVPPSGDVRAAIAAHQVLPAFGKKVISKLIDLLYTVVEFKDLPRILENIKALGFKYSTHSSTTVSVFDIPKYSNKQQYFDEADQQVLKYKQFYNKGLLTDDERYKRVVKLWNGVKEKVSSEIQDLIKREEYRDNSIVVMADSGARGNISNFTQLFGMRGLMSKSFNYERNNQSKIIKDTIEVPIKHSFLEGLTINEYFNSSYGARKGMTDTAMKTAKSGYMTRKLVDATHELIINHDDCGTRKGIVVEAIVETKTRSLVESLFDRIVNRYTIGPILDPETKAEIVPANSLITQELAKQICATSIKQVLVRSVIYCERENGVCQYCFGVDLSTGKLVELGTAVGVIAAQSIGEPGTQLTMRTFHTGGVSTENNLAQGFERLKQIFEVVAPKDYERCVISEVKGVVKSITTTQNAQEVLIESSVDERTYSIPFSAQLRVKVGDAVELGSKITEGSIDIRQLLRVAGIQRVRQYMIVEIQKVYRIQGIEIADKYVEIIIRQLTSLLQVTDAGSSNLFVGQLVHSHHLNELNKSLLLSGKMPVIAINQVFGIDEAASKSNSFLSAASFQDTKKILTDAAVKTQVDYLLGLKENVIIGGKIPAGTGFLTDEELAYLGAKTVQEEY.

Zn(2+)-binding residues include Cys68, Cys70, Cys83, and Cys86. 3 residues coordinate Mg(2+): Asp530, Asp532, and Asp534. Zn(2+)-binding residues include Cys909, Cys985, Cys992, and Cys995.

It belongs to the RNA polymerase beta' chain family. In terms of assembly, the RNAP catalytic core consists of 2 alpha, 1 beta, 1 beta' and 1 omega subunit. When a sigma factor is associated with the core the holoenzyme is formed, which can initiate transcription. The cofactor is Mg(2+). Requires Zn(2+) as cofactor.

It carries out the reaction RNA(n) + a ribonucleoside 5'-triphosphate = RNA(n+1) + diphosphate. Its function is as follows. DNA-dependent RNA polymerase catalyzes the transcription of DNA into RNA using the four ribonucleoside triphosphates as substrates. The sequence is that of DNA-directed RNA polymerase subunit beta' from Mycoplasma pneumoniae (strain ATCC 29342 / M129 / Subtype 1) (Mycoplasmoides pneumoniae).